The following is a 389-amino-acid chain: Liposome tubulation protein MamY (389 aa).

Topologically, residues 1–31 are cytoplasmic; sequence MAIAAIMGDVLMLMGFNKAAFGKLNSASRAA. A helical transmembrane segment spans residues 32–52; sequence LIGAVIWAVLSIVYLTIFNGW. At 53 to 62 the chain is on the lumenal side; sequence KNLFTMLPHE. The chain crosses the membrane as a helical span at residues 63-83; that stretch reads FFIVLLSIALPIGLTVLILML. The Cytoplasmic segment spans residues 84–389; sequence SRIVKSVDTL…TETAPDSGMD (306 aa).

It belongs to the magnetosome MamY family.

Its subcellular location is the magnetosome membrane. In terms of biological role, causes tubulation when added to magnetosome-derived liposomes, binds liposomes; may be involved in constriction of the cell inner membrane to form mature magnetosomes. Binds preferentially to cardiolipin, a component of bacterial membranes, with very poor to no binding of other tested (phospho)lipids. Addition of cardiolipin to magnetosome-derived lipids increases tubulation. May function with MamX, MamZ amd Mms6. The polypeptide is Liposome tubulation protein MamY (Paramagnetospirillum magneticum (strain ATCC 700264 / AMB-1) (Magnetospirillum magneticum)).